Here is a 292-residue protein sequence, read N- to C-terminus: Lipoyl synthase (292 aa).

Residues Cys38, Cys43, Cys49, Cys64, Cys68, Cys71, and Ser277 each coordinate [4Fe-4S] cluster. In terms of domain architecture, Radical SAM core spans Trp50–Arg266.

The protein belongs to the radical SAM superfamily. Lipoyl synthase family. [4Fe-4S] cluster serves as cofactor.

It is found in the cytoplasm. It carries out the reaction [[Fe-S] cluster scaffold protein carrying a second [4Fe-4S](2+) cluster] + N(6)-octanoyl-L-lysyl-[protein] + 2 oxidized [2Fe-2S]-[ferredoxin] + 2 S-adenosyl-L-methionine + 4 H(+) = [[Fe-S] cluster scaffold protein] + N(6)-[(R)-dihydrolipoyl]-L-lysyl-[protein] + 4 Fe(3+) + 2 hydrogen sulfide + 2 5'-deoxyadenosine + 2 L-methionine + 2 reduced [2Fe-2S]-[ferredoxin]. It participates in protein modification; protein lipoylation via endogenous pathway; protein N(6)-(lipoyl)lysine from octanoyl-[acyl-carrier-protein]: step 2/2. Functionally, catalyzes the radical-mediated insertion of two sulfur atoms into the C-6 and C-8 positions of the octanoyl moiety bound to the lipoyl domains of lipoate-dependent enzymes, thereby converting the octanoylated domains into lipoylated derivatives. This Chlorobium limicola (strain DSM 245 / NBRC 103803 / 6330) protein is Lipoyl synthase.